Here is a 182-residue protein sequence, read N- to C-terminus: Ribosome-recycling factor (182 aa).

It belongs to the RRF family.

Its subcellular location is the cytoplasm. Responsible for the release of ribosomes from messenger RNA at the termination of protein biosynthesis. May increase the efficiency of translation by recycling ribosomes from one round of translation to another. In Gloeothece citriformis (strain PCC 7424) (Cyanothece sp. (strain PCC 7424)), this protein is Ribosome-recycling factor.